Reading from the N-terminus, the 151-residue chain is Phosphopantetheine adenylyltransferase (151 aa).

Threonine 9 lines the substrate pocket. ATP-binding positions include 9-10 (TF) and histidine 17. Substrate contacts are provided by lysine 41, threonine 73, and arginine 87. ATP contacts are provided by residues 88–90 (GIR), glutamate 98, and 122–128 (LTSISST).

The protein belongs to the bacterial CoaD family. In terms of assembly, homohexamer. The cofactor is Mg(2+).

It is found in the cytoplasm. It carries out the reaction (R)-4'-phosphopantetheine + ATP + H(+) = 3'-dephospho-CoA + diphosphate. It participates in cofactor biosynthesis; coenzyme A biosynthesis; CoA from (R)-pantothenate: step 4/5. Functionally, reversibly transfers an adenylyl group from ATP to 4'-phosphopantetheine, yielding dephospho-CoA (dPCoA) and pyrophosphate. This is Phosphopantetheine adenylyltransferase from Phocaeicola vulgatus (strain ATCC 8482 / DSM 1447 / JCM 5826 / CCUG 4940 / NBRC 14291 / NCTC 11154) (Bacteroides vulgatus).